Consider the following 545-residue polypeptide: Probable sucrose-6-phosphate hydrolase (545 aa).

Substrate contacts are provided by residues 107–110 (LLND), glutamine 126, 169–170 (FS), 230–231 (RD), and glutamate 285. Residue aspartate 110 is part of the active site.

It belongs to the glycosyl hydrolase 32 family.

It is found in the cytoplasm. It catalyses the reaction Hydrolysis of terminal non-reducing beta-D-fructofuranoside residues in beta-D-fructofuranosides.. It participates in glycan biosynthesis; sucrose metabolism. Functionally, enables the bacterium to metabolize sucrose as a sole carbon source. In Psychromonas ingrahamii (strain DSM 17664 / CCUG 51855 / 37), this protein is Probable sucrose-6-phosphate hydrolase.